The following is a 494-amino-acid chain: Glycerol kinase 1 (494 aa).

Thr12 is a binding site for ADP. Residues Thr12, Thr13, and Ser14 each contribute to the ATP site. Thr12 is a binding site for sn-glycerol 3-phosphate. Arg16 contacts ADP. The sn-glycerol 3-phosphate site is built by Arg82, Glu83, Tyr134, and Asp243. Glycerol-binding residues include Arg82, Glu83, Tyr134, Asp243, and Gln244. The ADP site is built by Thr265 and Gly308. ATP is bound by residues Thr265, Gly308, Gln312, and Gly408. Positions 408 and 412 each coordinate ADP.

Belongs to the FGGY kinase family.

The catalysed reaction is glycerol + ATP = sn-glycerol 3-phosphate + ADP + H(+). The protein operates within polyol metabolism; glycerol degradation via glycerol kinase pathway; sn-glycerol 3-phosphate from glycerol: step 1/1. Inhibited by fructose 1,6-bisphosphate (FBP). Functionally, key enzyme in the regulation of glycerol uptake and metabolism. Catalyzes the phosphorylation of glycerol to yield sn-glycerol 3-phosphate. In Pseudomonas aeruginosa (strain ATCC 15692 / DSM 22644 / CIP 104116 / JCM 14847 / LMG 12228 / 1C / PRS 101 / PAO1), this protein is Glycerol kinase 1.